A 25-amino-acid chain; its full sequence is Cytochrome c oxidase subunit 1 (25 aa).

This sequence belongs to the heme-copper respiratory oxidase family. It depends on Cu(2+) as a cofactor. Requires heme as cofactor.

It localises to the cell inner membrane. The catalysed reaction is 4 Fe(II)-[cytochrome c] + O2 + 8 H(+)(in) = 4 Fe(III)-[cytochrome c] + 2 H2O + 4 H(+)(out). It functions in the pathway energy metabolism; oxidative phosphorylation. In terms of biological role, subunit I and II form the functional core of the enzyme complex. Electrons originating in cytochrome c are transferred via heme a and Cu(A) to the binuclear center formed by heme a3 and Cu(B). This cytochrome c oxidase shows proton pump activity across the membrane in addition to the electron transfer. In Paracoccus versutus (Thiobacillus versutus), this protein is Cytochrome c oxidase subunit 1 (ctaD).